Here is a 202-residue protein sequence, read N- to C-terminus: MPIEIPTDLTPELVPLSWLIGEWEGRGRLGTGDEDSEHFLQHVSFTHNGLPYLQYRAESWLTDDDGTRLRPLTVETGFWALERKQLDADGGPGLVPADIVPALKSADEVEALRNSEGGFDISVSISHPGGISELYYGQIKGPQIQLTTDMVMRGSHSKDYSAATRIFGLVDGNLLWRWDVATGGEAGKGLEAHASAFLARVS.

A GXWXGXG motif is present at residues 21-27 (GEWEGRG). His193 contributes to the heme b binding site.

This sequence belongs to the nitrobindin family. In terms of assembly, homodimer. Heme b is required as a cofactor.

It carries out the reaction peroxynitrite = nitrate. Its pathway is nitrogen metabolism. Its function is as follows. Heme-binding protein able to scavenge peroxynitrite and to protect free L-tyrosine against peroxynitrite-mediated nitration, by acting as a peroxynitrite isomerase that converts peroxynitrite to nitrate. Therefore, this protein likely plays a role in peroxynitrite sensing and in the detoxification of reactive nitrogen and oxygen species (RNS and ROS, respectively). Is able to bind nitric oxide (NO) in vitro, but may act as a sensor of peroxynitrite levels in vivo. This is Peroxynitrite isomerase from Pseudarthrobacter chlorophenolicus (strain ATCC 700700 / DSM 12829 / CIP 107037 / JCM 12360 / KCTC 9906 / NCIMB 13794 / A6) (Arthrobacter chlorophenolicus).